Reading from the N-terminus, the 866-residue chain is Leucine--tRNA ligase (866 aa).

Positions 59 to 69 (PYPSGDLHMGH) match the 'HIGH' region motif. The disordered stretch occupies residues 393–421 (VPVIKTDPQTGEPLLPESAPLESPAETGQ). A compositionally biased stretch (low complexity) spans 404–418 (EPLLPESAPLESPAE). The short motif at 628-632 (AMSKS) is the 'KMSKS' region element. Lys-631 is a binding site for ATP.

Belongs to the class-I aminoacyl-tRNA synthetase family.

The protein resides in the cytoplasm. The catalysed reaction is tRNA(Leu) + L-leucine + ATP = L-leucyl-tRNA(Leu) + AMP + diphosphate. In Leifsonia xyli subsp. xyli (strain CTCB07), this protein is Leucine--tRNA ligase.